The primary structure comprises 930 residues: Isoleucine--tRNA ligase (930 aa).

Residues 57 to 67 (PYANGHLHLGH) carry the 'HIGH' region motif. Glutamate 555 provides a ligand contact to L-isoleucyl-5'-AMP. The short motif at 596 to 600 (KMSKS) is the 'KMSKS' region element. Lysine 599 lines the ATP pocket. Residues cysteine 896, cysteine 899, cysteine 916, and cysteine 919 each coordinate Zn(2+).

Belongs to the class-I aminoacyl-tRNA synthetase family. IleS type 1 subfamily. Monomer. It depends on Zn(2+) as a cofactor.

Its subcellular location is the cytoplasm. The enzyme catalyses tRNA(Ile) + L-isoleucine + ATP = L-isoleucyl-tRNA(Ile) + AMP + diphosphate. In terms of biological role, catalyzes the attachment of isoleucine to tRNA(Ile). As IleRS can inadvertently accommodate and process structurally similar amino acids such as valine, to avoid such errors it has two additional distinct tRNA(Ile)-dependent editing activities. One activity is designated as 'pretransfer' editing and involves the hydrolysis of activated Val-AMP. The other activity is designated 'posttransfer' editing and involves deacylation of mischarged Val-tRNA(Ile). The chain is Isoleucine--tRNA ligase from Moorella thermoacetica (strain ATCC 39073 / JCM 9320).